The sequence spans 304 residues: Homoserine kinase (304 aa).

90–100 lines the ATP pocket; that stretch reads PLARGLGSSAS.

The protein belongs to the GHMP kinase family. Homoserine kinase subfamily.

The protein resides in the cytoplasm. The catalysed reaction is L-homoserine + ATP = O-phospho-L-homoserine + ADP + H(+). Its pathway is amino-acid biosynthesis; L-threonine biosynthesis; L-threonine from L-aspartate: step 4/5. Its function is as follows. Catalyzes the ATP-dependent phosphorylation of L-homoserine to L-homoserine phosphate. The chain is Homoserine kinase from Staphylococcus aureus (strain MSSA476).